We begin with the raw amino-acid sequence, 415 residues long: Gamma-glutamyl phosphate reductase (415 aa).

The protein belongs to the gamma-glutamyl phosphate reductase family.

The protein resides in the cytoplasm. The catalysed reaction is L-glutamate 5-semialdehyde + phosphate + NADP(+) = L-glutamyl 5-phosphate + NADPH + H(+). The protein operates within amino-acid biosynthesis; L-proline biosynthesis; L-glutamate 5-semialdehyde from L-glutamate: step 2/2. Functionally, catalyzes the NADPH-dependent reduction of L-glutamate 5-phosphate into L-glutamate 5-semialdehyde and phosphate. The product spontaneously undergoes cyclization to form 1-pyrroline-5-carboxylate. The polypeptide is Gamma-glutamyl phosphate reductase (Mycobacterium bovis (strain BCG / Pasteur 1173P2)).